The following is a 302-amino-acid chain: Elongation factor Ts (302 aa).

Residues 82–85 form an involved in Mg(2+) ion dislocation from EF-Tu region; that stretch reads TDFV.

Belongs to the EF-Ts family.

The protein localises to the cytoplasm. In terms of biological role, associates with the EF-Tu.GDP complex and induces the exchange of GDP to GTP. It remains bound to the aminoacyl-tRNA.EF-Tu.GTP complex up to the GTP hydrolysis stage on the ribosome. The chain is Elongation factor Ts from Nitrosospira multiformis (strain ATCC 25196 / NCIMB 11849 / C 71).